The sequence spans 419 residues: Protein translocase subunit SecY (419 aa).

10 consecutive transmembrane segments (helical) span residues 19–39 (IMIL…ITEV), 64–84 (VISI…AVQF), 113–133 (ILTV…LRSF), 143–163 (FVVA…SEVI), 167–189 (GIGN…FLIN), 202–222 (SNLY…FSTL), 255–275 (FGQA…FLTT), 299–319 (IFYF…YTLI), 359–379 (FVGS…AAAL), and 380–400 (GVHP…SIIN).

Belongs to the SecY/SEC61-alpha family. Component of the plastid Sec protein translocase complex, which is composed of at least SecY and SecE.

It localises to the plastid. The protein localises to the chloroplast thylakoid membrane. The central subunit of the protein translocation channel SecYE. Consists of two halves formed by TMs 1-5 and 6-10. These two domains form a lateral gate at the front which open onto the bilayer between TMs 2 and 7, and are clamped together by SecE at the back. The channel is closed by both a pore ring composed of hydrophobic SecY resides and a short helix (helix 2A) on the extracellular side of the membrane which forms a plug. The sequence is that of Protein translocase subunit SecY from Diacronema lutheri (Unicellular marine alga).